Here is a 137-residue protein sequence, read N- to C-terminus: Thioredoxin-like protein R548 (137 aa).

Residues 2–137 form the Thioredoxin domain; that stretch reads SKDSVETNTI…LEKSIVESSQ (136 aa). Residues C61 and C64 each act as nucleophile in the active site. C61 and C64 are disulfide-bonded.

This sequence belongs to the thioredoxin family.

In terms of biological role, participates in various redox reactions through the reversible oxidation of its active center dithiol to a disulfide and catalyzes dithiol-disulfide exchange reactions. In Acanthamoeba polyphaga mimivirus (APMV), this protein is Thioredoxin-like protein R548.